The following is a 279-amino-acid chain: tRNA dimethylallyltransferase (279 aa).

10–17 (GPTASGKS) lines the ATP pocket. 12–17 (TASGKS) is a substrate binding site.

This sequence belongs to the IPP transferase family. In terms of assembly, monomer. Requires Mg(2+) as cofactor.

It catalyses the reaction adenosine(37) in tRNA + dimethylallyl diphosphate = N(6)-dimethylallyladenosine(37) in tRNA + diphosphate. Functionally, catalyzes the transfer of a dimethylallyl group onto the adenine at position 37 in tRNAs that read codons beginning with uridine, leading to the formation of N6-(dimethylallyl)adenosine (i(6)A). This Roseobacter denitrificans (strain ATCC 33942 / OCh 114) (Erythrobacter sp. (strain OCh 114)) protein is tRNA dimethylallyltransferase.